The sequence spans 349 residues: Hydroxymethylglutaryl-CoA synthase (349 aa).

2 residues coordinate (3S)-3-hydroxy-3-methylglutaryl-CoA: D30 and A31. The active-site Proton donor/acceptor is the E82. Residues C114 and T155 each coordinate (3S)-3-hydroxy-3-methylglutaryl-CoA. C114 serves as the catalytic Acyl-thioester intermediate. CoA is bound at residue R203. 2 residues coordinate (3S)-3-hydroxy-3-methylglutaryl-CoA: T205 and H238. The active-site Proton donor/acceptor is H238. K243 contributes to the CoA binding site. (3S)-3-hydroxy-3-methylglutaryl-CoA-binding residues include N270 and S300.

Belongs to the thiolase-like superfamily. Archaeal HMG-CoA synthase family. In terms of assembly, interacts with acetoacetyl-CoA thiolase that catalyzes the precedent step in the pathway and with a DUF35 protein. The acetoacetyl-CoA thiolase/HMG-CoA synthase complex channels the intermediate via a fused CoA-binding site, which allows for efficient coupling of the endergonic thiolase reaction with the exergonic HMGCS reaction.

It catalyses the reaction acetoacetyl-CoA + acetyl-CoA + H2O = (3S)-3-hydroxy-3-methylglutaryl-CoA + CoA + H(+). It participates in metabolic intermediate biosynthesis; (R)-mevalonate biosynthesis; (R)-mevalonate from acetyl-CoA: step 2/3. Catalyzes the condensation of acetyl-CoA with acetoacetyl-CoA to form 3-hydroxy-3-methylglutaryl-CoA (HMG-CoA). Functions in the mevalonate (MVA) pathway leading to isopentenyl diphosphate (IPP), a key precursor for the biosynthesis of isoprenoid compounds that are building blocks of archaeal membrane lipids. The chain is Hydroxymethylglutaryl-CoA synthase from Methanococcus maripaludis (strain C7 / ATCC BAA-1331).